The sequence spans 161 residues: Nucleotide-binding protein Pput_4372 (161 aa).

The protein belongs to the YajQ family.

Its function is as follows. Nucleotide-binding protein. The polypeptide is Nucleotide-binding protein Pput_4372 (Pseudomonas putida (strain ATCC 700007 / DSM 6899 / JCM 31910 / BCRC 17059 / LMG 24140 / F1)).